The following is a 287-amino-acid chain: Cell wall protein PIR5 (287 aa).

A signal peptide spans 1 to 21; the sequence is MHYKKAFLASLLSSIALTAYA. Positions 22 to 62 are excised as a propeptide; it reads PPEPWATLTPSSKMDGGTTEYRTSFGLAVIPFTVTESKVKR. 4 PIR1/2/3 repeats span residues 62–80, 81–99, 104–122, and 144–162; these read RNVI…TQKL, PHPV…TQKV, SHIV…TAKN, and ATAV…ISSA.

Belongs to the PIR protein family. Covalently linked to beta-1,3-glucan of the inner cell wall layer via an alkali-sensitive ester linkage between the gamma-carboxyl group of glutamic acids, arising from specific glutamines within the PIR1/2/3 repeats, and hydroxyl groups of glucoses of beta-1,3-glucan chains.

It is found in the secreted. It localises to the cell wall. Component of the outer cell wall layer. May be involved in meiosis and sporulation. The chain is Cell wall protein PIR5 (PIR5) from Saccharomyces cerevisiae (strain YJM789) (Baker's yeast).